A 202-amino-acid chain; its full sequence is Na(+)-translocating NADH-quinone reductase subunit E (202 aa).

6 helical membrane passes run Leu4–Gly24, Ile35–Ile55, Phe81–Phe101, Gly114–Val134, Leu144–Val164, and Leu180–Ile200.

Belongs to the NqrDE/RnfAE family. In terms of assembly, composed of six subunits; NqrA, NqrB, NqrC, NqrD, NqrE and NqrF.

It localises to the cell inner membrane. The catalysed reaction is a ubiquinone + n Na(+)(in) + NADH + H(+) = a ubiquinol + n Na(+)(out) + NAD(+). Its function is as follows. NQR complex catalyzes the reduction of ubiquinone-1 to ubiquinol by two successive reactions, coupled with the transport of Na(+) ions from the cytoplasm to the periplasm. NqrA to NqrE are probably involved in the second step, the conversion of ubisemiquinone to ubiquinol. This Nitrosomonas europaea (strain ATCC 19718 / CIP 103999 / KCTC 2705 / NBRC 14298) protein is Na(+)-translocating NADH-quinone reductase subunit E.